We begin with the raw amino-acid sequence, 121 residues long: UPF0231 protein ESA_03214 (121 aa).

This sequence belongs to the UPF0231 family.

The protein is UPF0231 protein ESA_03214 of Cronobacter sakazakii (strain ATCC BAA-894) (Enterobacter sakazakii).